The sequence spans 380 residues: Cytochrome b (380 aa).

The next 4 membrane-spanning stretches (helical) occupy residues 33–53 (FGSL…FLAM), 77–98 (WLIR…FLHV), 113–133 (WNMG…GYVL), and 178–198 (FFAF…VHLL). Residues His83 and His97 each contribute to the heme b site. Heme b-binding residues include His182 and His196. Position 201 (His201) interacts with a ubiquinone. 4 helical membrane-spanning segments follow: residues 226–246 (IKDL…VLFF), 288–308 (LGGV…PLLH), 320–340 (ITQT…WIGG), and 347–367 (FIMI…IFMP).

Belongs to the cytochrome b family. In terms of assembly, the cytochrome bc1 complex contains 11 subunits: 3 respiratory subunits (MT-CYB, CYC1 and UQCRFS1), 2 core proteins (UQCRC1 and UQCRC2) and 6 low-molecular weight proteins (UQCRH/QCR6, UQCRB/QCR7, UQCRQ/QCR8, UQCR10/QCR9, UQCR11/QCR10 and a cleavage product of UQCRFS1). This cytochrome bc1 complex then forms a dimer. Requires heme b as cofactor.

It localises to the mitochondrion inner membrane. In terms of biological role, component of the ubiquinol-cytochrome c reductase complex (complex III or cytochrome b-c1 complex) that is part of the mitochondrial respiratory chain. The b-c1 complex mediates electron transfer from ubiquinol to cytochrome c. Contributes to the generation of a proton gradient across the mitochondrial membrane that is then used for ATP synthesis. This is Cytochrome b (MT-CYB) from Synaptomys borealis (Northern bog lemming).